The sequence spans 252 residues: Small ribosomal subunit protein eS1B (252 aa).

A2 bears the N-acetylalanine; partial mark. A Phosphoserine modification is found at S251.

The protein belongs to the eukaryotic ribosomal protein eS1 family. In terms of assembly, component of the small ribosomal subunit (SSU). Mature yeast ribosomes consist of a small (40S) and a large (60S) subunit. The 40S small subunit contains 1 molecule of ribosomal RNA (18S rRNA) and at least 33 different proteins. The large 60S subunit contains 3 rRNA molecules (25S, 5.8S and 5S rRNA) and at least 46 different proteins. eS1 interacts directly with uS11 and eS26, which form part of the mRNA exit tunnel.

It is found in the cytoplasm. Its function is as follows. Component of the ribosome, a large ribonucleoprotein complex responsible for the synthesis of proteins in the cell. The small ribosomal subunit (SSU) binds messenger RNAs (mRNAs) and translates the encoded message by selecting cognate aminoacyl-transfer RNA (tRNA) molecules. The large subunit (LSU) contains the ribosomal catalytic site termed the peptidyl transferase center (PTC), which catalyzes the formation of peptide bonds, thereby polymerizing the amino acids delivered by tRNAs into a polypeptide chain. The nascent polypeptides leave the ribosome through a tunnel in the LSU and interact with protein factors that function in enzymatic processing, targeting, and the membrane insertion of nascent chains at the exit of the ribosomal tunnel. This Schizosaccharomyces pombe (strain 972 / ATCC 24843) (Fission yeast) protein is Small ribosomal subunit protein eS1B (rps102).